Consider the following 153-residue polypeptide: FAD synthase (153 aa).

Residues 9–10 (TF), 14–17 (HPGH), N92, and Y119 each bind ATP.

This sequence belongs to the archaeal FAD synthase family. As to quaternary structure, homodimer. Requires a divalent metal cation as cofactor.

It catalyses the reaction FMN + ATP + H(+) = FAD + diphosphate. The protein operates within cofactor biosynthesis; FAD biosynthesis; FAD from FMN: step 1/1. Functionally, catalyzes the transfer of the AMP portion of ATP to flavin mononucleotide (FMN) to produce flavin adenine dinucleotide (FAD) coenzyme. The protein is FAD synthase of Methanosphaerula palustris (strain ATCC BAA-1556 / DSM 19958 / E1-9c).